The following is a 554-amino-acid chain: Formate--tetrahydrofolate ligase (554 aa).

Position 63-70 (63-70 (TPAGEGKT)) interacts with ATP.

The protein belongs to the formate--tetrahydrofolate ligase family.

The catalysed reaction is (6S)-5,6,7,8-tetrahydrofolate + formate + ATP = (6R)-10-formyltetrahydrofolate + ADP + phosphate. The protein operates within one-carbon metabolism; tetrahydrofolate interconversion. In Halothermothrix orenii (strain H 168 / OCM 544 / DSM 9562), this protein is Formate--tetrahydrofolate ligase.